The chain runs to 395 residues: Methylmalonyl-CoA decarboxylase subunit beta (395 aa).

9 helical membrane passes run Leu-17–Ala-37, Leu-43–Met-63, Gly-103–Ile-123, Ser-128–Ala-148, Pro-180–Ile-200, Ile-230–Leu-250, Ile-278–Phe-298, Leu-304–Leu-324, and Gly-374–Phe-394.

The protein belongs to the GcdB/MmdB/OadB family. In terms of assembly, the methylmalonyl-CoA decarboxylase is composed of four subunits: the carboxyltransferase alpha subunit (MmdA), the tunnel beta subunit (MmdB), the biotin-containing gamma subunit (MmdC) and the delta subunit (MmdD). The N-terminus is blocked.

It is found in the cell membrane. It catalyses the reaction (S)-methylmalonyl-CoA + Na(+)(in) + H(+)(out) = propanoyl-CoA + Na(+)(out) + CO2. Tunnel subunit of the sodium ion pump methylmalonyl-CoA decarboxylase, which converts the chemical energy of a decarboxylation reaction into an electrochemical gradient of Na(+) ions across the cytoplasmic membrane, thereby creating a sodium ion motive force that is used for ATP synthesis. The beta subunit catalyzes the decarboxylation of the carboxybiotin carrier protein and the coupled export of Na(+) ions. The polypeptide is Methylmalonyl-CoA decarboxylase subunit beta (Propionigenium modestum).